A 352-amino-acid polypeptide reads, in one-letter code: C-C chemokine receptor type 5 (352 aa).

Residues 1 to 30 lie on the Extracellular side of the membrane; the sequence is MDYQVSSPIYDIDYGPSEPCRKIDVKQMGA. Y3 carries the sulfotyrosine modification. Residues S6 and S7 are each glycosylated (O-linked (GalNAc...) serine). 2 positions are modified to sulfotyrosine: Y10 and Y14. Intrachain disulfides connect C20/C269 and C101/C178. The helical transmembrane segment at 31-58 threads the bilayer; the sequence is HLLPPLYSMVFLFGFVGNMLVVLILINC. Over 59–68 the chain is Cytoplasmic; it reads KRLKSMTDIY. A helical membrane pass occupies residues 69 to 89; that stretch reads LLNLAISDLIFLFTVPFWAHY. Residues 90–102 lie on the Extracellular side of the membrane; that stretch reads AAGQWDFGNTMCQ. The chain crosses the membrane as a helical span at residues 103–124; that stretch reads FLTGLYFIGFFSGIFFIILLTI. Residues 125-141 are Cytoplasmic-facing; sequence DRYLAIVHAVFALKART. A helical transmembrane segment spans residues 142–166; that stretch reads VTFGVVTSVITWVVAVFASLPGIIF. At 167–198 the chain is on the extracellular side; it reads TRSQKEGYHYTCSPHFPFSQYQFWKNFETLKM. The helical transmembrane segment at 199 to 218 threads the bilayer; that stretch reads VILGLVLPLLVMVICYSGIL. Residues 219 to 235 lie on the Cytoplasmic side of the membrane; the sequence is KTLLRCRNEKKRHRAVR. Residues 236–260 form a helical membrane-spanning segment; the sequence is LIFTIMIVYFLFWAPYNIVLLLNTY. Residues 261 to 277 are Extracellular-facing; the sequence is QEFFGLNNCSSSNRLDQ. The chain crosses the membrane as a helical span at residues 278 to 301; it reads AMQVTETLGMTHCCVNPIIYAFVG. The Cytoplasmic portion of the chain corresponds to 302-352; sequence EKFRNYLKVFFQKHIAKCFCECCSIFQKEAPERANSVYTRSTGEQEISVGL. 3 S-palmitoyl cysteine lipidation sites follow: C321, C323, and C324. Phosphoserine; by BARK1 occurs at positions 337, 342, and 349.

The protein belongs to the G-protein coupled receptor 1 family. As to quaternary structure, interacts with PRAF2. Efficient ligand binding to CCL3/MIP-1alpha and CCL4/MIP-1beta requires sulfation, O-glycosylation and sialic acid modifications. Glycosylation on Ser-6 is required for efficient binding of CCL4. Interacts with GRK2. Interacts with ARRB1 and ARRB2. Interacts with CNIH4. Interacts with S100A4; this interaction stimulates T-lymphocyte chemotaxis. Sulfated on at least 2 of the N-terminal tyrosines. Sulfation is required for efficient binding of the chemokines, CCL3 and CCL4. In terms of processing, palmitoylation in the C-terminal is important for cell surface expression. Post-translationally, phosphorylation on serine residues in the C-terminal is stimulated by binding CC chemokines especially by APO-RANTES. O-glycosylated, but not N-glycosylated. Ser-6 appears to be the major site even if Ser-7 may be also O-glycosylated. Also sialylated glycans present which contribute to chemokine binding. Ser-17 may also be glycosylated and, if so, with small moieties such as a T-antigen.

It is found in the cell membrane. Its function is as follows. Receptor for a number of inflammatory CC-chemokines including CCL3/MIP-1-alpha, CCL4/MIP-1-beta and RANTES and subsequently transduces a signal by increasing the intracellular calcium ion level. May play a role in the control of granulocytic lineage proliferation or differentiation. Participates in T-lymphocyte migration to the infection site by acting as a chemotactic receptor. The protein is C-C chemokine receptor type 5 (CCR5) of Mico humeralifer (Black and white tassel-ear marmoset).